A 251-amino-acid polypeptide reads, in one-letter code: Large ribosomal subunit protein uL16m (251 aa).

The transit peptide at 1–29 directs the protein to the mitochondrion; the sequence is MWRLLTRVPAPLLRMHFSDSWAALPTSAG.

Belongs to the universal ribosomal protein uL16 family. Component of the mitochondrial ribosome large subunit (39S) which comprises a 16S rRNA and about 50 distinct proteins.

The protein localises to the mitochondrion. The polypeptide is Large ribosomal subunit protein uL16m (Mrpl16) (Mus musculus (Mouse)).